The sequence spans 387 residues: 3-ketoacyl-CoA thiolase (387 aa).

Cysteine 91 (acyl-thioester intermediate) is an active-site residue. Residues histidine 343 and cysteine 373 each act as proton acceptor in the active site.

This sequence belongs to the thiolase-like superfamily. Thiolase family. In terms of assembly, heterotetramer of two alpha chains (FadB) and two beta chains (FadA).

The protein resides in the cytoplasm. The enzyme catalyses an acyl-CoA + acetyl-CoA = a 3-oxoacyl-CoA + CoA. Its pathway is lipid metabolism; fatty acid beta-oxidation. Catalyzes the final step of fatty acid oxidation in which acetyl-CoA is released and the CoA ester of a fatty acid two carbons shorter is formed. The polypeptide is 3-ketoacyl-CoA thiolase (Salmonella paratyphi A (strain ATCC 9150 / SARB42)).